Consider the following 170-residue polypeptide: CKLMAFSSINHLGWMLLAMMNNELLWMTYFLLYSLLSISIIMMFNNFKLFYFNQIFNISMMNPIIKFLIFLNLLSLGGLPPFLGFLPKWLVIQNLTSMNQLFILTISVCLTLITLYFYLRLSYSIFMLNYQKNTWMLKNIYSMKMSSMSLILNFISIGGLLMILMFYMIL.

4 helical membrane passes run 24–44, 67–87, 101–121, and 150–170; these read LLWM…IMMF, FLIF…GFLP, LFIL…YLRL, and LILN…YMIL.

This sequence belongs to the complex I subunit 2 family.

It is found in the mitochondrion inner membrane. It catalyses the reaction a ubiquinone + NADH + 5 H(+)(in) = a ubiquinol + NAD(+) + 4 H(+)(out). Functionally, core subunit of the mitochondrial membrane respiratory chain NADH dehydrogenase (Complex I) that is believed to belong to the minimal assembly required for catalysis. Complex I functions in the transfer of electrons from NADH to the respiratory chain. The immediate electron acceptor for the enzyme is believed to be ubiquinone. The sequence is that of NADH-ubiquinone oxidoreductase chain 2 (ND2) from Anopheles albimanus (New world malaria mosquito).